Reading from the N-terminus, the 573-residue chain is Methionine--tRNA ligase (573 aa).

The 'HIGH' region motif lies at 10-20 (PYVNSVPHLGN). Zn(2+) is bound by residues C143, C146, C156, and C159. The 'KMSKS' region motif lies at 333–337 (KFSKS). K336 contributes to the ATP binding site.

Belongs to the class-I aminoacyl-tRNA synthetase family. MetG type 1 subfamily. Zn(2+) serves as cofactor.

It is found in the cytoplasm. It carries out the reaction tRNA(Met) + L-methionine + ATP = L-methionyl-tRNA(Met) + AMP + diphosphate. In terms of biological role, is required not only for elongation of protein synthesis but also for the initiation of all mRNA translation through initiator tRNA(fMet) aminoacylation. The sequence is that of Methionine--tRNA ligase from Saccharolobus islandicus (strain M.14.25 / Kamchatka #1) (Sulfolobus islandicus).